Here is a 30-residue protein sequence, read N- to C-terminus: DDCGKLFSGCDTNADCCEGYVCRLWCKLDW.

Cystine bridges form between Cys3–Cys17, Cys10–Cys22, and Cys16–Cys26. Position 30 is a tryptophan amide (Trp30).

Belongs to the neurotoxin 10 (Hwtx-1) family. 19 (HpTX2) subfamily. In terms of tissue distribution, expressed by the venom gland.

Its subcellular location is the secreted. In terms of biological role, inhibitor of voltage-gated potassium channels of the Kv4/KCND family. Inhibition of Kv4.3/KCND3 and Kv4.2/KCND2 is strongly voltage-dependent, while inhibition of Kv4.1/KCND1 shows less voltage-dependence. Its binding site may be near the potassium channel voltage sensor. Also blocks calcium channels. The protein is Kappa-sparatoxin-Hv1b of Heteropoda venatoria (Brown huntsman spider).